The sequence spans 391 residues: N-acetylaspartylglutamate synthase A (391 aa).

The ATP-grasp domain maps to 115–300 (FQELAGHGVP…VGGIIADYTM (186 aa)). Residues Lys154, 189–199 (QKYVKESHGKD), and Arg215 contribute to the ATP site. Positions 260, 273, and 275 each coordinate Mg(2+). 3 residues coordinate Mn(2+): Asp260, Glu273, and Asn275. Residue Ser319 is modified to Phosphoserine. Residues 341–350 (TINSGSTSSE) are compositionally biased toward polar residues. Residues 341–379 (TINSGSTSSESEPELGEIRDSSASTMGAPPSMLPEPGYN) form a disordered region.

The protein belongs to the RimK family. The cofactor is Mg(2+). It depends on Mn(2+) as a cofactor.

The protein localises to the cytoplasm. The catalysed reaction is N-acetyl-L-aspartate + L-glutamate + ATP = N-acetyl-L-aspartyl-L-glutamate + ADP + phosphate + H(+). The enzyme catalyses N-acetyl-L-aspartate + 2 L-glutamate + 2 ATP = N-acetyl-L-aspartyl-L-glutamyl-L-glutamate + 2 ADP + 2 phosphate + 2 H(+). Catalyzes the synthesis of N-acetyl-L-aspartyl-L-glutamate (NAAG) and N-acetyl-L-aspartyl-L-glutamyl-L-glutamate. This is N-acetylaspartylglutamate synthase A (RIMKLA) from Homo sapiens (Human).